Consider the following 280-residue polypeptide: Late embryogenesis abundant protein M17 (280 aa).

An N-terminal signal peptide occupies residues 1–22 (MGNLKSLVLLALLFSFSVAVFA). The N-linked (GlcNAc...) asparagine glycan is linked to Asn23. 2 tandem repeats follow at residues 76-97 (GGCR…CCRS) and 131-152 (GGCR…CCRS). Residues 76-262 (GGCRWGCCGG…RGRCRYCCRS (187 aa)) form a 4 X 22 AA repeats, Cys-rich region. Residues 163–184 (VEPNDVEPQQGGRGGGGGGGGG) form a disordered region. Over residues 173-184 (GGRGGGGGGGGG) the composition is skewed to gly residues. The stretch at 186–207 (GGCRWGCCGGWWRGRCRYCCRS) is repeat 3. Residues 218–239 (VEPNDVEPQQGGRGGGGGGGGG) form a disordered region. A compositionally biased stretch (gly residues) spans 228-239 (GGRGGGGGGGGG). Repeat unit 4 spans residues 241 to 262 (GGCRWGCCGGWWRGRCRYCCRS).

May be involved in the acquisition of desiccation tolerance during late phase of embryogenesis. This chain is Late embryogenesis abundant protein M17, found in Arabidopsis thaliana (Mouse-ear cress).